The sequence spans 395 residues: Chaperone protein DnaJ 2 (395 aa).

A J domain is found at 10 to 75 (NYYADLGVSS…KKRKEYDELK (66 aa)). The CR-type zinc-finger motif lies at 165 to 242 (GTTIPVELTG…CHGRGTVRKS (78 aa)). 8 residues coordinate Zn(2+): Cys-178, Cys-181, Cys-194, Cys-197, Cys-216, Cys-219, Cys-230, and Cys-233. CXXCXGXG motif repeat units lie at residues 178 to 185 (CNTCHGSG), 194 to 201 (CGTCDGTG), 216 to 223 (CATCGGTG), and 230 to 237 (CDNCHGRG).

Belongs to the DnaJ family. As to quaternary structure, homodimer. The cofactor is Zn(2+).

It is found in the cytoplasm. Functionally, participates actively in the response to hyperosmotic and heat shock by preventing the aggregation of stress-denatured proteins and by disaggregating proteins, also in an autonomous, DnaK-independent fashion. Unfolded proteins bind initially to DnaJ; upon interaction with the DnaJ-bound protein, DnaK hydrolyzes its bound ATP, resulting in the formation of a stable complex. GrpE releases ADP from DnaK; ATP binding to DnaK triggers the release of the substrate protein, thus completing the reaction cycle. Several rounds of ATP-dependent interactions between DnaJ, DnaK and GrpE are required for fully efficient folding. Also involved, together with DnaK and GrpE, in the DNA replication of plasmids through activation of initiation proteins. This is Chaperone protein DnaJ 2 from Corynebacterium glutamicum (strain ATCC 13032 / DSM 20300 / JCM 1318 / BCRC 11384 / CCUG 27702 / LMG 3730 / NBRC 12168 / NCIMB 10025 / NRRL B-2784 / 534).